The following is a 491-amino-acid chain: NADH-quinone oxidoreductase subunit N (491 aa).

14 helical membrane passes run 6–26 (TLAP…INWI), 37–57 (VAYP…GMNA), 69–89 (LVVI…GLFV), 103–123 (MFAG…IVMI), 128–148 (FLTL…LVAL), 163–183 (FVLG…MYGA), 206–226 (LAFG…AAPF), 238–258 (PTAV…ALFI), 273–293 (QMML…TAIV), 301–321 (LAYS…SGVV), 335–355 (AMFY…IILL), 379–399 (FAFL…TVGF), 413–433 (GMTW…FYYL), and 458–478 (SMLS…AALM).

It belongs to the complex I subunit 2 family. In terms of assembly, NDH-1 is composed of 14 different subunits. Subunits NuoA, H, J, K, L, M, N constitute the membrane sector of the complex.

Its subcellular location is the cell inner membrane. It carries out the reaction a quinone + NADH + 5 H(+)(in) = a quinol + NAD(+) + 4 H(+)(out). NDH-1 shuttles electrons from NADH, via FMN and iron-sulfur (Fe-S) centers, to quinones in the respiratory chain. The immediate electron acceptor for the enzyme in this species is believed to be ubiquinone. Couples the redox reaction to proton translocation (for every two electrons transferred, four hydrogen ions are translocated across the cytoplasmic membrane), and thus conserves the redox energy in a proton gradient. The chain is NADH-quinone oxidoreductase subunit N from Cupriavidus taiwanensis (strain DSM 17343 / BCRC 17206 / CCUG 44338 / CIP 107171 / LMG 19424 / R1) (Ralstonia taiwanensis (strain LMG 19424)).